A 362-amino-acid polypeptide reads, in one-letter code: Glycyl-glycine endopeptidase ALE-1 (362 aa).

Positions 1 to 35 are cleaved as a signal peptide; that stretch reads MDTNRKFTLVKSLSIGLGTFLVGSVFLTVNDEASA. The segment at 35-110 is disordered; it reads ASTKVDAPKV…PAKADAPKVE (76 aa). Over residues 40 to 110 the composition is skewed to basic and acidic residues; that stretch reads DAPKVEQEAP…PAKADAPKVE (71 aa). Positions 150 and 154 each coordinate Zn(2+). Residue His231 is part of the active site. A Zn(2+)-binding site is contributed by His233. One can recognise an SH3b domain in the interval 282–350; that stretch reads SESASFTANT…YLPVRTWNES (69 aa).

This sequence belongs to the peptidase M23B family. Requires Zn(2+) as cofactor.

It localises to the secreted. The enzyme catalyses Hydrolysis of the -Gly-|-Gly- bond in the pentaglycine inter-peptide link joining staphylococcal cell wall peptidoglycans.. Lyses staphylococcal cells by hydrolyzing the polyglycine interpeptide bridges of the peptidoglycan. This is Glycyl-glycine endopeptidase ALE-1 from Staphylococcus capitis.